A 342-amino-acid chain; its full sequence is 4-hydroxy-2-oxovalerate aldolase (342 aa).

Residues 7–257 (IWITEVALRD…KTGVDLYKMM (251 aa)) enclose the Pyruvate carboxyltransferase domain. Substrate is bound at residue 15–16 (RD). Asp16 lines the Mn(2+) pocket. Catalysis depends on His19, which acts as the Proton acceptor. 2 residues coordinate substrate: Ser169 and His196. Mn(2+) contacts are provided by His196 and His198. Residue Tyr287 participates in substrate binding.

This sequence belongs to the 4-hydroxy-2-oxovalerate aldolase family.

It carries out the reaction (S)-4-hydroxy-2-oxopentanoate = acetaldehyde + pyruvate. The chain is 4-hydroxy-2-oxovalerate aldolase (nbaI) from Geobacillus thermodenitrificans (strain NG80-2).